A 410-amino-acid polypeptide reads, in one-letter code: Probable ATP-dependent RNA helicase MG308 (410 aa).

Positions 26–179 (VFKLWPFQNI…KKQVINTKVI (154 aa)) constitute a Helicase ATP-binding domain. 39–46 (AETGSGKT) serves as a coordination point for ATP. Residues 126-129 (DEID) carry the DEID box motif. The Helicase C-terminal domain occupies 190-357 (LVKHFVVHLN…DLKFLTENNQ (168 aa)).

Belongs to the DEAD box helicase family.

The enzyme catalyses ATP + H2O = ADP + phosphate + H(+). The chain is Probable ATP-dependent RNA helicase MG308 from Mycoplasma genitalium (strain ATCC 33530 / DSM 19775 / NCTC 10195 / G37) (Mycoplasmoides genitalium).